The primary structure comprises 198 residues: NAD(P)H dehydrogenase (quinone) (198 aa).

The Flavodoxin-like domain maps to 4–189; it reads VLVLYYSMYG…SIARYQGEYV (186 aa). Residues 10 to 15 and 78 to 80 each bind FMN; these read SMYGHI and TRF. Tyr12 is an NAD(+) binding site. Trp98 contributes to the substrate binding site. FMN contacts are provided by residues 113–118 and His133; that span reads STGTGG.

The protein belongs to the WrbA family. FMN is required as a cofactor.

The enzyme catalyses a quinone + NADH + H(+) = a quinol + NAD(+). It carries out the reaction a quinone + NADPH + H(+) = a quinol + NADP(+). The chain is NAD(P)H dehydrogenase (quinone) from Shigella dysenteriae serotype 1 (strain Sd197).